The chain runs to 260 residues: OCIA domain-containing protein 1 (260 aa).

An OCIA domain is found at 1 to 110 (MDSPLSDGSR…MRLPNSRLGE (110 aa)). The disordered stretch occupies residues 146–260 (DVYTDEGLNP…KNKYGDSWQD (115 aa)). Polar residues predominate over residues 155-164 (PSRSTALNLD). The segment covering 205-215 (EDLRKKNREGY) has biased composition (basic and acidic residues).

Belongs to the OCIAD1 family.

This Drosophila pseudoobscura pseudoobscura (Fruit fly) protein is OCIA domain-containing protein 1.